Reading from the N-terminus, the 143-residue chain is Beta/delta-urticatoxin-Uf2a (143 aa).

An N-terminal signal peptide occupies residues 1–18 (MGAIVLVALMALVASSSA). Positions 19–80 (FSDIEHNIMK…MMLSGRPQPN (62 aa)) are excised as a propeptide. 6 disulfide bridges follow: cysteine 83-cysteine 100, cysteine 90-cysteine 105, cysteine 99-cysteine 113, cysteine 115-cysteine 129, cysteine 122-cysteine 134, and cysteine 128-cysteine 142.

It belongs to the urticatoxin-2 family. Expressed in trichomes, that are stiff epidermal hairs located on the surface of petioles and leaves.

It localises to the secreted. Functionally, plant defense neurotoxin that causes pain and systemic symptoms in mammals via modulation of voltage-gated sodium channels (Nav). Potent modulator of human Nav1.5/SCN5A (EC(50)=55 nM), Nav1.6/SCN8A (EC(50)=0.86 nM), and Nav1.7/SCN9A (EC(50)=208 nM), where it shifts the activation threshold to more negative potentials and delays fast inactivation. Also shifts the voltage-dependence of steady-state fast inactivation of Nav1.6/SCN8A, but not that of Nav1.5/SCN5A or Nav1.7/SCN9A. On Nav1.7/SCN9A, principally acts by binding to extracellular loops of domain IV (Nav site 3). Does not affect current response of the tetrodotoxin (TTX)-resistant Nav1.8/SCN10A sodium channel. In vivo, intraplantar injection into mice causes numerous dose-dependent, immediate, and long-lasting spontaneous pain behaviors, while no swelling is observed in the injected paw. At the highest doses tested, systemic symptoms including hypokinesia and hypersalivation are observed. In Urtica ferox (Tree nettle), this protein is Beta/delta-urticatoxin-Uf2a.